A 527-amino-acid polypeptide reads, in one-letter code: Bifunctional purine biosynthesis protein PurH (527 aa).

Residues 1–149 (MASDFLPVRR…KNFARVAVAT (149 aa)) form the MGS-like domain.

The protein belongs to the PurH family.

It catalyses the reaction (6R)-10-formyltetrahydrofolate + 5-amino-1-(5-phospho-beta-D-ribosyl)imidazole-4-carboxamide = 5-formamido-1-(5-phospho-D-ribosyl)imidazole-4-carboxamide + (6S)-5,6,7,8-tetrahydrofolate. The enzyme catalyses IMP + H2O = 5-formamido-1-(5-phospho-D-ribosyl)imidazole-4-carboxamide. Its pathway is purine metabolism; IMP biosynthesis via de novo pathway; 5-formamido-1-(5-phospho-D-ribosyl)imidazole-4-carboxamide from 5-amino-1-(5-phospho-D-ribosyl)imidazole-4-carboxamide (10-formyl THF route): step 1/1. It functions in the pathway purine metabolism; IMP biosynthesis via de novo pathway; IMP from 5-formamido-1-(5-phospho-D-ribosyl)imidazole-4-carboxamide: step 1/1. The sequence is that of Bifunctional purine biosynthesis protein PurH from Xanthomonas campestris pv. campestris (strain 8004).